The primary structure comprises 183 residues: Copper transporter 4 (183 aa).

A disordered region spans residues 1 to 21 (MAMPMPMPPPGPGGDAPPAPT). 2 helical membrane passes run 56–76 (VGMY…AEAL) and 115–135 (LAYL…LAAV).

Belongs to the copper transporter (Ctr) (TC 1.A.56) family. SLC31A subfamily.

The protein resides in the membrane. Involved in the transport of copper. In Oryza sativa subsp. japonica (Rice), this protein is Copper transporter 4 (COPT4).